A 354-amino-acid chain; its full sequence is Guanine nucleotide-binding protein G(o) subunit alpha (354 aa).

Gly-2 carries the N-myristoyl glycine lipid modification. Cys-3 carries S-palmitoyl cysteine lipidation. The G-alpha domain maps to 32–354 (KDIKLLLLGA…ANNLRGCGLY (323 aa)). The tract at residues 35-48 (KLLLLGAGESGKST) is G1 motif. GTP contacts are provided by residues 40 to 47 (GAGESGKS), 176 to 182 (LRTRVKT), 201 to 205 (DVGGQ), 270 to 273 (NKKD), and Ala-326. Positions 47 and 182 each coordinate Mg(2+). Positions 174–182 (DILRTRVKT) are G2 motif. Positions 197–206 (FKLFDVGGQR) are G3 motif. Residues 266 to 273 (ILFLNKKD) form a G4 motif region. Positions 324–329 (TCATDT) are G5 motif.

The protein belongs to the G-alpha family. G(i/o/t/z) subfamily. In terms of assembly, g proteins are composed of 3 units; alpha, beta and gamma. The alpha chain contains the guanine nucleotide binding site.

Its function is as follows. Guanine nucleotide-binding proteins (G proteins) are involved as modulators or transducers in various transmembrane signaling systems. The G(o) protein function is not clear. In Lymnaea stagnalis (Great pond snail), this protein is Guanine nucleotide-binding protein G(o) subunit alpha.